We begin with the raw amino-acid sequence, 38 residues long: Photosystem II reaction center protein L (38 aa).

A helical transmembrane segment spans residues 17–37 (SLFWGLLLIFVLAVLFSSYFF).

It belongs to the PsbL family. As to quaternary structure, PSII is composed of 1 copy each of membrane proteins PsbA, PsbB, PsbC, PsbD, PsbE, PsbF, PsbH, PsbI, PsbJ, PsbK, PsbL, PsbM, PsbT, PsbX, PsbY, PsbZ, Psb30/Ycf12, at least 3 peripheral proteins of the oxygen-evolving complex and a large number of cofactors. It forms dimeric complexes.

The protein localises to the plastid. Its subcellular location is the chloroplast thylakoid membrane. Its function is as follows. One of the components of the core complex of photosystem II (PSII). PSII is a light-driven water:plastoquinone oxidoreductase that uses light energy to abstract electrons from H(2)O, generating O(2) and a proton gradient subsequently used for ATP formation. It consists of a core antenna complex that captures photons, and an electron transfer chain that converts photonic excitation into a charge separation. This subunit is found at the monomer-monomer interface and is required for correct PSII assembly and/or dimerization. The polypeptide is Photosystem II reaction center protein L (Gracilaria tenuistipitata var. liui (Red alga)).